A 590-amino-acid polypeptide reads, in one-letter code: MASVTSLTASVHQRLADALSAALPEAGSADPLLRRSDRADFQANGILALAKKAKANPRDLATQVVARVESGEVIKDIEVSGPGFLNITITDQAITRNLAARYEDGERLGVPLAEHPGTTVIDYAQPNVAKEMHVGHLRSAVIGDAVVQILEFTGENVVRRHHIGDWGTQFGMLIQYLIEHPHELDHKGAAEVSGEEAMSNLNRLYKAARTLFDSDEEFKTRARRRVVDLQAGEPETLAMWQKFVDESKIYFYSVFDKLDLEIRDPDVVGESGYNDMLDETCRLLEESGVAVRSDGALCVFFDDVKGPDGNPVPLIVKKSDGGYGYAATDLSAIRDRVFNLKANSLIYVVDARQSLHFKMVFETARRAGWLNDDVQAQQLAFGTVLGKDGKPFKTREGETIRLVDLLDEAIDRATAVVREKAEKVGLSEQEIEENGRYVGIGAVKYADLSTSAVRDYKFDLDQMVSLNGDTSVYLQYAYARIRSIFGKAGDRTPLAHPELELAPAERALGLHLDRFGETLDEVAAEYAPHKLAAYLYQLASLYTTFYDQCPVIKPAPAQEVAENRLFLCDLTARTLHQGMALLGIRTPERL.

The short motif at 126-136 (PNVAKEMHVGH) is the 'HIGH' region element.

It belongs to the class-I aminoacyl-tRNA synthetase family. Monomer.

It is found in the cytoplasm. The enzyme catalyses tRNA(Arg) + L-arginine + ATP = L-arginyl-tRNA(Arg) + AMP + diphosphate. This Streptomyces avermitilis (strain ATCC 31267 / DSM 46492 / JCM 5070 / NBRC 14893 / NCIMB 12804 / NRRL 8165 / MA-4680) protein is Arginine--tRNA ligase.